The sequence spans 140 residues: MAVTRTFSIIKPDATRRNLTGAVTKMLEDAGLRVVASKRIHMTREQAEGFYAVHKERPFFGELVEFMISGPVVVQVLEGEDAVKRNRDVMGATNPADAAEGTIRKTFAESIEANSVHGSDSDENAATEIAYFFKPEEIVG.

6 residues coordinate ATP: lysine 11, phenylalanine 59, arginine 87, threonine 93, arginine 104, and asparagine 114. The Pros-phosphohistidine intermediate role is filled by histidine 117.

It belongs to the NDK family. In terms of assembly, homotetramer. The cofactor is Mg(2+).

It localises to the cytoplasm. It carries out the reaction a 2'-deoxyribonucleoside 5'-diphosphate + ATP = a 2'-deoxyribonucleoside 5'-triphosphate + ADP. The catalysed reaction is a ribonucleoside 5'-diphosphate + ATP = a ribonucleoside 5'-triphosphate + ADP. In terms of biological role, major role in the synthesis of nucleoside triphosphates other than ATP. The ATP gamma phosphate is transferred to the NDP beta phosphate via a ping-pong mechanism, using a phosphorylated active-site intermediate. In Sphingopyxis alaskensis (strain DSM 13593 / LMG 18877 / RB2256) (Sphingomonas alaskensis), this protein is Nucleoside diphosphate kinase.